A 144-amino-acid polypeptide reads, in one-letter code: Pleckstrin homology-like domain family A member 2 (144 aa).

Residues 18-111 (ILCEGELEKR…AAITMALIDF (94 aa)) enclose the PH domain. At Ser140 the chain carries Phosphoserine.

The protein belongs to the PHLDA2 family. As to expression, specifically expressed at high levels in extraembryonic tissues in the developing conceptus (at protein level). Expressed in placenta and yolc sac. Expressed at low levels in fetal liver and kidney.

It is found in the cytoplasm. Its subcellular location is the membrane. Plays a role in regulating placenta growth. May act via its PH domain that competes with other PH domain-containing proteins, thereby preventing their binding to membrane lipids. This chain is Pleckstrin homology-like domain family A member 2 (Phlda2), found in Mus musculus (Mouse).